A 224-amino-acid polypeptide reads, in one-letter code: Small ribosomal subunit protein uS7 (224 aa).

Belongs to the universal ribosomal protein uS7 family. In terms of assembly, part of the 30S ribosomal subunit.

Functionally, one of the primary rRNA binding proteins, it binds directly to 16S rRNA where it nucleates assembly of the head domain of the 30S subunit. Is located at the subunit interface close to the decoding center. This is Small ribosomal subunit protein uS7 from Caldivirga maquilingensis (strain ATCC 700844 / DSM 13496 / JCM 10307 / IC-167).